We begin with the raw amino-acid sequence, 901 residues long: Core protein VP3 (901 aa).

Belongs to the orbivirus VP3 family.

The protein resides in the virion. In terms of biological role, the VP3 protein is one of the five proteins (with VP1, VP4, VP6 and VP7) which form the inner capsid of the virus. The polypeptide is Core protein VP3 (Segment-3) (Bluetongue virus 1 (isolate South Africa) (BTV 1)).